The sequence spans 439 residues: Uracil-regulated protein 1 (439 aa).

A disordered region spans residues M1 to V24. Residue R268–E272 participates in GTP binding. The Zn(2+) site is built by C273, C284, and C286. E315–R317 serves as a coordination point for GTP. D353 functions as the Proton acceptor in the catalytic mechanism. R355 acts as the Nucleophile in catalysis. Positions 377 and 382 each coordinate GTP.

It belongs to the GTP cyclohydrolase II family.

It localises to the cytoplasm. The protein localises to the nucleus. The chain is Uracil-regulated protein 1 (urg1) from Schizosaccharomyces pombe (strain 972 / ATCC 24843) (Fission yeast).